The chain runs to 551 residues: Probable metalloreductase AIM14 (551 aa).

The next 7 membrane-spanning stretches (helical) occupy residues 25-45 (GIII…VKFI), 67-87 (PTWM…GANI), 100-117 (RYGR…YLIL), 138-155 (KWLS…AIGY), 172-192 (FLNF…IVSI), 199-221 (YYSL…IIFH), and 225-247 (GVTI…LRFY). Residues 102 to 217 (GRIAYCLLPL…NITAWSMVVL (116 aa)) form the Ferric oxidoreductase domain. The region spanning 247–369 (YKSYPVNNLK…GGSGISFGLP (123 aa)) is the FAD-binding FR-type domain. Residues 440–492 (QDESHAKVEQTQGEEEVDGLLNQDENGIPLQSMKKESFPKKEEGEDEEKSSKD) form a disordered region. Positions 472-492 (MKKESFPKKEEGEDEEKSSKD) are enriched in basic and acidic residues.

It belongs to the ferric reductase (FRE) family. AIM14 subfamily.

The protein resides in the membrane. Probable cell surface metalloreductase. May be involved in iron or copper homeostasis. The polypeptide is Probable metalloreductase AIM14 (AIM14) (Candida tropicalis (strain ATCC MYA-3404 / T1) (Yeast)).